The chain runs to 527 residues: Peptide chain release factor 3 (527 aa).

The tr-type G domain maps to 9–277 (AKRRTFAIIS…AVVDWAPRPL (269 aa)). GTP is bound by residues 18–25 (SHPDAGKT), 86–90 (DTPGH), and 140–143 (NKLD).

Belongs to the TRAFAC class translation factor GTPase superfamily. Classic translation factor GTPase family. PrfC subfamily.

It localises to the cytoplasm. Increases the formation of ribosomal termination complexes and stimulates activities of RF-1 and RF-2. It binds guanine nucleotides and has strong preference for UGA stop codons. It may interact directly with the ribosome. The stimulation of RF-1 and RF-2 is significantly reduced by GTP and GDP, but not by GMP. The polypeptide is Peptide chain release factor 3 (Pseudomonas putida (strain W619)).